The chain runs to 561 residues: MEDLTKNIIFTNAINGQPATIQYQTADGTILKQPKIEGQKTEQQPTFYYTTNGNGGTVNLAQLATTDDNKTCYIAQPVGGYNYALVNGMPLNQGAALGIATVDAQGRIQIVNQNKPIAANTISNISFKCDVCSDMFPHLALLNAHKRMHTDGEQQQQQQHNAQAGGDSIAVVSAQGLVQAQNIIGNGQMGQIQIVSSDTLEPVQQSVMQQQQHESKASKCINCGSSMLQQSKRKGPKQVRCESCMQAEQTAQQQQQLFVAQDGQMAHPVQIISTTPQAQAQLQQIVAAQTGGTTPKREASSGSGHHPVKKRNSQQMTKCQKCNGSGVVLVGQHSHASHSGVGGSVKQSVTVKTENPSKPFSCNICGGLFSRYSSLWSHKKLHSGEKNYKCSICGLAFAKAVYLKNHARIHTGEKPYKCQTCGMQFSQSPHLKNHERTHSGERPYVCGVCDKGFARHATLWNHRRIHTGEKPYKCEICGSAFSQAAHLKNHAKVHSGEKPYKCEICSAAFADRFALKRHRGIHQKYGQTAPRQTSSDGMIVHKQEIPDMEDEAQQEVIIGGL.

The C2H2-type 1 zinc-finger motif lies at 127–149 (FKCDVCSDMFPHLALLNAHKRMH). Positions 129, 132, 145, and 149 each coordinate Zn(2+). The disordered stretch occupies residues 290–315 (TGGTTPKREASSGSGHHPVKKRNSQQ). 6 C2H2-type zinc fingers span residues 360 to 382 (FSCNICGGLFSRYSSLWSHKKLH), 388 to 410 (YKCSICGLAFAKAVYLKNHARIH), 416 to 438 (YKCQTCGMQFSQSPHLKNHERTH), 444 to 466 (YVCGVCDKGFARHATLWNHRRIH), 472 to 494 (YKCEICGSAFSQAAHLKNHAKVH), and 500 to 522 (YKCEICSAAFADRFALKRHRGIH).

Homodimer. Interacts with msl-2; promoting recruitment of the male-specific lethal (MSL) histone acetyltransferase complex to chromatin. Interacts with Nelf-A. Interacts with NELF-B.

The protein localises to the nucleus. It is found in the chromosome. Its function is as follows. Transcription factor involved in X-chromosome dosage compensation in males, the process by which transcription of the single X chromosome in the male is elevated. Binds to the DNA sequence (GA)n. Clamp-binding promotes nucleosome depletion and chromatin accessibility, thereby allowing access to other transcription factors. Specifically binds to cis-acting elements on the X-chromosome named chromatin entry sites and promotes recruitment of the male-specific lethal (MSL) histone acetyltransferase complex, which associates with actively transcribed genes on the male X-chromosome to upregulate their expression. Mechanistically, acts by promoting chromatin accessibility at chromatin entry sites, facilitating DNA-binding of msl-2, followed by MSL complex recruitment. In addition to dosage compensation, also involved in zygotic genome activation (ZGA), a critical event in early embryonic development during which the developmental control passes from maternally provided mRNAs to the expression of the zygotic genome after fertilization. Maternally-provided protein cooperates with Zelda (zld) to activate zygotic transcription by increasing chromatin accessibility at promoters of specific genes and facilitate zld occupancy at a subset of key embryonic promoters. Also acts as an activator of gypsy chromatin insulator function by promoting binding of Cp190 to chromatin. The sequence is that of Transcription factor Clamp from Drosophila melanogaster (Fruit fly).